A 107-amino-acid chain; its full sequence is UPF0122 protein EAT1b_2891 (107 aa).

The protein belongs to the UPF0122 family.

Functionally, might take part in the signal recognition particle (SRP) pathway. This is inferred from the conservation of its genetic proximity to ftsY/ffh. May be a regulatory protein. The sequence is that of UPF0122 protein EAT1b_2891 from Exiguobacterium sp. (strain ATCC BAA-1283 / AT1b).